Reading from the N-terminus, the 395-residue chain is Phosphoserine aminotransferase (395 aa).

Residue Thr-20 is modified to Phosphothreonine. 80 to 81 (GT) provides a ligand contact to pyridoxal 5'-phosphate. Ser-112 bears the Phosphoserine mark. Residues Trp-113, Thr-170, Asp-194, and Gln-217 each coordinate pyridoxal 5'-phosphate. N6-(pyridoxal phosphate)lysine is present on Lys-218. 271 to 272 (NT) contacts pyridoxal 5'-phosphate.

This sequence belongs to the class-V pyridoxal-phosphate-dependent aminotransferase family. SerC subfamily. As to quaternary structure, homodimer. Pyridoxal 5'-phosphate serves as cofactor.

The enzyme catalyses O-phospho-L-serine + 2-oxoglutarate = 3-phosphooxypyruvate + L-glutamate. It catalyses the reaction 4-(phosphooxy)-L-threonine + 2-oxoglutarate = (R)-3-hydroxy-2-oxo-4-phosphooxybutanoate + L-glutamate. Its pathway is amino-acid biosynthesis; L-serine biosynthesis; L-serine from 3-phospho-D-glycerate: step 2/3. Functionally, phosphoserine aminotransferase (PSAT) is a pyridoxal 5'-phosphate-dependent enzyme involved in the second step of the phosphorylated pathway of serine biosynthesis. Catalyzes the reversible conversion of 3-phosphohydroxypyruvate to phosphoserine and of 3-hydroxy-2-oxo-4-phosphonooxybutanoate to phosphohydroxythreonine. Plays an indirect role in purine biosynthesis. This chain is Phosphoserine aminotransferase, found in Saccharomyces cerevisiae (strain ATCC 204508 / S288c) (Baker's yeast).